The following is a 338-amino-acid chain: uncharacterized protein (338 aa).

The region spanning His-111–Asp-334 is the Radical SAM core domain. [4Fe-4S] cluster is bound by residues Cys-129, Cys-133, and Cys-136.

The cofactor is [4Fe-4S] cluster.

This is an uncharacterized protein from Methanocaldococcus jannaschii (strain ATCC 43067 / DSM 2661 / JAL-1 / JCM 10045 / NBRC 100440) (Methanococcus jannaschii).